A 235-amino-acid chain; its full sequence is Adenosine 5'-phosphosulfate reductase (235 aa).

Residues C121, C122, C204, and C207 each contribute to the [4Fe-4S] cluster site. The active-site Nucleophile; cysteine thiosulfonate intermediate is the C230.

The protein belongs to the PAPS reductase family. CysH subfamily. Requires [4Fe-4S] cluster as cofactor.

It is found in the cytoplasm. The catalysed reaction is [thioredoxin]-disulfide + sulfite + AMP + 2 H(+) = adenosine 5'-phosphosulfate + [thioredoxin]-dithiol. It functions in the pathway sulfur metabolism; hydrogen sulfide biosynthesis; sulfite from sulfate. Functionally, catalyzes the formation of sulfite from adenosine 5'-phosphosulfate (APS) using thioredoxin as an electron donor. This chain is Adenosine 5'-phosphosulfate reductase, found in Geobacillus thermodenitrificans (strain NG80-2).